The following is a 95-amino-acid chain: Small ribosomal subunit protein uS15 (95 aa).

It belongs to the universal ribosomal protein uS15 family. Part of the 30S ribosomal subunit. Forms a bridge to the 50S subunit in the 70S ribosome, contacting the 23S rRNA.

In terms of biological role, one of the primary rRNA binding proteins, it binds directly to 16S rRNA where it helps nucleate assembly of the platform of the 30S subunit by binding and bridging several RNA helices of the 16S rRNA. Forms an intersubunit bridge (bridge B4) with the 23S rRNA of the 50S subunit in the ribosome. This Streptomyces coelicolor (strain ATCC BAA-471 / A3(2) / M145) protein is Small ribosomal subunit protein uS15.